Reading from the N-terminus, the 230-residue chain is Probable cytokinin riboside 5'-monophosphate phosphoribohydrolase LOG4 (230 aa).

Substrate-binding positions include Glu-91, 109 to 110 (RK), and 126 to 132 (GYGTIEE).

It belongs to the LOG family.

It catalyses the reaction N(6)-(dimethylallyl)adenosine 5'-phosphate + H2O = N(6)-dimethylallyladenine + D-ribose 5-phosphate. The catalysed reaction is 9-ribosyl-trans-zeatin 5'-phosphate + H2O = trans-zeatin + D-ribose 5-phosphate. In terms of biological role, cytokinin-activating enzyme working in the direct activation pathway. Phosphoribohydrolase that converts inactive cytokinin nucleotides to the biologically active free-base forms. The sequence is that of Probable cytokinin riboside 5'-monophosphate phosphoribohydrolase LOG4 (LOGL4) from Oryza sativa subsp. japonica (Rice).